The chain runs to 440 residues: Proline--tRNA ligase (440 aa).

Belongs to the class-II aminoacyl-tRNA synthetase family. ProS type 2 subfamily. In terms of assembly, homodimer.

It localises to the cytoplasm. The catalysed reaction is tRNA(Pro) + L-proline + ATP = L-prolyl-tRNA(Pro) + AMP + diphosphate. In terms of biological role, catalyzes the attachment of proline to tRNA(Pro) in a two-step reaction: proline is first activated by ATP to form Pro-AMP and then transferred to the acceptor end of tRNA(Pro). This Rhizobium etli (strain ATCC 51251 / DSM 11541 / JCM 21823 / NBRC 15573 / CFN 42) protein is Proline--tRNA ligase.